Here is a 137-residue protein sequence, read N- to C-terminus: Large ribosomal subunit protein uL16 (137 aa).

It belongs to the universal ribosomal protein uL16 family. In terms of assembly, part of the 50S ribosomal subunit.

Binds 23S rRNA and is also seen to make contacts with the A and possibly P site tRNAs. This is Large ribosomal subunit protein uL16 from Stutzerimonas stutzeri (strain A1501) (Pseudomonas stutzeri).